Reading from the N-terminus, the 211-residue chain is Ras-related protein rab-11.1 (211 aa).

GTP is bound at residue 18–26 (GDSGVGKSN). The Effector region motif lies at 40–48 (SKSTIGVEF). GTP contacts are provided by residues 66-70 (DTAGQ), 124-127 (NKSD), and 154-156 (SAL). The tract at residues 187 to 211 (GYGGGSGTIIPSPASDPPKKQCCIP) is disordered. S-geranylgeranyl cysteine attachment occurs at residues Cys-208 and Cys-209.

The protein belongs to the small GTPase superfamily. Rab family. In terms of assembly, interacts with rei-1 and rei-2. The GDP-form preferentially binds to rei-1 and rei-2. As to expression, expressed weakly in sperm, but more predominantly in oocytes. Expressed in the intestine.

The protein resides in the cytoplasmic vesicle. It is found in the secretory vesicle. It localises to the endosome. The protein localises to the cytoplasm. Its subcellular location is the cytoskeleton. The protein resides in the spindle. It is found in the microtubule organizing center. It localises to the spindle pole body. The protein localises to the centrosome. Its subcellular location is the apical cell membrane. The protein resides in the cytosol. It is found in the recycling endosome membrane. It localises to the golgi apparatus membrane. The protein localises to the cytoplasmic granule. In terms of biological role, the small GTPases Rab are key regulators of intracellular membrane trafficking, from the formation of transport vesicles to their fusion with membranes. Rabs cycle between an inactive GDP-bound form and an active GTP-bound form that is able to recruit to membranes different set of downstream effectors directly responsible for vesicle formation, movement, tethering and fusion. Involved in regulating the meiotic maturation of oocytes. Plays a role in egg shell formation, regulating exocytosis of chondroitin proteoglycans following fertilization. Controls cortical granule localization and targets them to the plasma membrane for exocytosis. Acts as a major regulator of membrane delivery during cytokinesis. Regulates the cytoskeleton by facilitating astral microtubule elongation and organization during metaphase to ensure proper spindle alignment and polarity in the first embryonic cell division. Maintains normal endoplasmic reticulum morphology during metaphase. Involved in vesicle formation and plasma membrane repair following exposure to pore forming toxins. Regulates endocytic recycling. May play a role in yolk receptor endocytosis in growing oocytes. Plays a role in the shedding of pathogen spores from intestinal cells via its involvement in spore fusion and endocytic trafficking. The polypeptide is Ras-related protein rab-11.1 (Caenorhabditis elegans).